Here is a 258-residue protein sequence, read N- to C-terminus: F-box/LRR-repeat protein 25 (258 aa).

Residues 27–76 (SDSISNLPDEILHHILSFIPETNLVIRTSVLSKRWRHVWSKTPHLSFEWL) form the F-box domain. 4 LRR repeats span residues 101–130 (CTSY…SLAF), 136–161 (CNKF…SLTP), 177–202 (RCNL…SLKF), and 224–249 (RRSC…RLRD).

This Arabidopsis thaliana (Mouse-ear cress) protein is F-box/LRR-repeat protein 25 (FBL25).